Here is a 148-residue protein sequence, read N- to C-terminus: MKALIILGLVLLSVTVQGKIFERCELARTLKKLGLDGYKGVSLANWVCLAKWESGYNTEATNYNPGDESTDYGIFQINSRYWCNNGKTPGAVDACHISCSALLQNNIADAVACAKRVVSDPQGIRAWVAWRNHCQNRDVSQYVKGCGV.

The N-terminal stretch at 1 to 18 is a signal peptide; the sequence is MKALIILGLVLLSVTVQG. Positions 19 to 148 constitute a C-type lysozyme domain; that stretch reads KIFERCELAR…VSQYVKGCGV (130 aa). 4 cysteine pairs are disulfide-bonded: C24–C146, C48–C134, C83–C99, and C95–C113. Active-site residues include E53 and D71.

This sequence belongs to the glycosyl hydrolase 22 family. As to quaternary structure, monomer.

Its subcellular location is the secreted. It catalyses the reaction Hydrolysis of (1-&gt;4)-beta-linkages between N-acetylmuramic acid and N-acetyl-D-glucosamine residues in a peptidoglycan and between N-acetyl-D-glucosamine residues in chitodextrins.. Functionally, lysozymes have primarily a bacteriolytic function; those in tissues and body fluids are associated with the monocyte-macrophage system and enhance the activity of immunoagents. This chain is Lysozyme C (LYZ), found in Nasalis larvatus (Proboscis monkey).